The sequence spans 366 residues: Phenylalanine dehydrogenase (366 aa).

An NAD(+)-binding site is contributed by Arg45. L-phenylalanine is bound at residue Lys69. Lys81 is a catalytic residue. NAD(+) contacts are provided by residues Asp116, Thr151, 181-187, 204-205, 241-242, and 262-264; these read GVGKVGE, DI, AK, and SAN. Asn264 is an L-phenylalanine binding site.

This sequence belongs to the Glu/Leu/Phe/Val dehydrogenases family.

It carries out the reaction L-phenylalanine + NAD(+) + H2O = 3-phenylpyruvate + NH4(+) + NADH + H(+). The protein operates within amino-acid biosynthesis; L-phenylalanine biosynthesis; L-phenylalanine from phenylpyruvate (PDH route): step 1/1. Catalyzes the reversible NAD(+)-dependent oxidative deamination of L-phenylalanine to phenylpyruvate. The protein is Phenylalanine dehydrogenase of Thermoactinomyces intermedius.